A 160-amino-acid chain; its full sequence is 3-dehydroquinate dehydratase (160 aa).

Tyrosine 28 (proton acceptor) is an active-site residue. 3 residues coordinate substrate: asparagine 79, histidine 85, and aspartate 92. Histidine 105 functions as the Proton donor in the catalytic mechanism. Substrate is bound by residues 106 to 107 and arginine 116; that span reads MS.

This sequence belongs to the type-II 3-dehydroquinase family. In terms of assembly, homododecamer.

It catalyses the reaction 3-dehydroquinate = 3-dehydroshikimate + H2O. It functions in the pathway metabolic intermediate biosynthesis; chorismate biosynthesis; chorismate from D-erythrose 4-phosphate and phosphoenolpyruvate: step 3/7. Its function is as follows. Catalyzes a trans-dehydration via an enolate intermediate. This Gloeobacter violaceus (strain ATCC 29082 / PCC 7421) protein is 3-dehydroquinate dehydratase.